Consider the following 354-residue polypeptide: Serine/threonine-protein kinase-transforming protein mos (354 aa).

In terms of domain architecture, Protein kinase spans 74–350; the sequence is VCLMHRLGSG…LLQRDLKAFR (277 aa). ATP contacts are provided by residues 80-88 and K101; that span reads LGSGGFGSV. D209 (proton acceptor) is an active-site residue.

Belongs to the protein kinase superfamily. Ser/Thr protein kinase family.

It carries out the reaction L-seryl-[protein] + ATP = O-phospho-L-seryl-[protein] + ADP + H(+). It catalyses the reaction L-threonyl-[protein] + ATP = O-phospho-L-threonyl-[protein] + ADP + H(+). This chain is Serine/threonine-protein kinase-transforming protein mos (V-MOS), found in Moloney murine sarcoma virus (strain ts110) (MoMSV).